Here is a 69-residue protein sequence, read N- to C-terminus: U-scoloptoxin(21)-Sm2a (69 aa).

The signal sequence occupies residues 1–21 (MFFLGFIIVCASEEQSDNRLP). The disordered stretch occupies residues 46 to 69 (ANDPNGPGRRRRSPIVREEILRHP). Positions 60–69 (IVREEILRHP) are enriched in basic and acidic residues.

It belongs to the scoloptoxin-21 family. As to expression, expressed by the venom gland.

The protein resides in the secreted. The polypeptide is U-scoloptoxin(21)-Sm2a (Scolopendra morsitans (Tanzanian blue ringleg centipede)).